Consider the following 247-residue polypeptide: Probable 2-phosphosulfolactate phosphatase (247 aa).

Belongs to the ComB family. The cofactor is Mg(2+).

It catalyses the reaction (2R)-O-phospho-3-sulfolactate + H2O = (2R)-3-sulfolactate + phosphate. The chain is Probable 2-phosphosulfolactate phosphatase from Clostridium perfringens (strain 13 / Type A).